The following is a 364-amino-acid chain: MDSSRTIGLYFDSAHSSSNLLAFPIVLQDTGDGKKQIAPQYRIQRLDLWTDSKEDSVFITTYGFIFQVGNEEATVGIIDDKPKRELLSAAMLCLGSVPNTGDLIELARACLTMMVTCKKSATNTERMVFSVVQAPQVLQSCRVVANKYSSVNAVKHVKAPEKIPGSGTLEYKVNFVSLTVVPKKDVYKIPAAVLKISGSSLYNLALNVTINVEVDPRSPLVKSLSKSDSGYYANLFLHIGLMTTVDRKGKKVTFDKLEKKIRSLDLSVGLSDVLGPSVLVKARGARTKLLAPFFSSSGTACYPIANASPQVAKILWSQTACLRSVKIIIQAGTQRAVAVTADHEVTSTKLEKGHTLAKYNPFKK.

An FPIV motif motif is present at residues 23–26; it reads FPIV.

This sequence belongs to the morbillivirus/respirovirus/rubulavirus M protein family.

Its subcellular location is the virion. The M protein has a crucial role in virus assembly and interacts with the RNP complex as well as with the viral membrane. The polypeptide is Matrix protein (M) (Gallus gallus (Chicken)).